The chain runs to 132 residues: Ribosome-binding factor A (132 aa).

It belongs to the RbfA family. In terms of assembly, monomer. Binds 30S ribosomal subunits, but not 50S ribosomal subunits or 70S ribosomes.

Its subcellular location is the cytoplasm. One of several proteins that assist in the late maturation steps of the functional core of the 30S ribosomal subunit. Associates with free 30S ribosomal subunits (but not with 30S subunits that are part of 70S ribosomes or polysomes). Required for efficient processing of 16S rRNA. May interact with the 5'-terminal helix region of 16S rRNA. This Burkholderia multivorans (strain ATCC 17616 / 249) protein is Ribosome-binding factor A.